Here is a 292-residue protein sequence, read N- to C-terminus: 33 kDa chaperonin (292 aa).

2 disulfides stabilise this stretch: C230/C232 and C263/C266.

Belongs to the HSP33 family. In terms of processing, under oxidizing conditions two disulfide bonds are formed involving the reactive cysteines. Under reducing conditions zinc is bound to the reactive cysteines and the protein is inactive.

It localises to the cytoplasm. Its function is as follows. Redox regulated molecular chaperone. Protects both thermally unfolding and oxidatively damaged proteins from irreversible aggregation. Plays an important role in the bacterial defense system toward oxidative stress. The chain is 33 kDa chaperonin from Escherichia coli O17:K52:H18 (strain UMN026 / ExPEC).